A 577-amino-acid polypeptide reads, in one-letter code: Sulfite reductase [NADPH] hemoprotein beta-component (577 aa).

The [4Fe-4S] cluster site is built by Cys440, Cys446, Cys486, and Cys490. Cys490 contacts siroheme.

It belongs to the nitrite and sulfite reductase 4Fe-4S domain family. As to quaternary structure, alpha(8)-beta(8). The alpha component is a flavoprotein, the beta component is a hemoprotein. Siroheme serves as cofactor. It depends on [4Fe-4S] cluster as a cofactor.

The catalysed reaction is hydrogen sulfide + 3 NADP(+) + 3 H2O = sulfite + 3 NADPH + 4 H(+). It participates in sulfur metabolism; hydrogen sulfide biosynthesis; hydrogen sulfide from sulfite (NADPH route): step 1/1. Its function is as follows. Component of the sulfite reductase complex that catalyzes the 6-electron reduction of sulfite to sulfide. This is one of several activities required for the biosynthesis of L-cysteine from sulfate. In Vibrio cholerae serotype O1 (strain ATCC 39315 / El Tor Inaba N16961), this protein is Sulfite reductase [NADPH] hemoprotein beta-component.